A 262-amino-acid polypeptide reads, in one-letter code: ClpXP adapter protein SpxH (262 aa).

Belongs to the SpxH family. As to quaternary structure, interacts with Spx.

The protein localises to the cytoplasm. Functionally, adapter protein required for efficient degradation of Spx by ClpXP under non-stress conditions. Interaction with Spx stabilizes Spx and exposes the C-terminus of Spx for recognition and proteolysis by ClpXP. The chain is ClpXP adapter protein SpxH from Staphylococcus saprophyticus subsp. saprophyticus (strain ATCC 15305 / DSM 20229 / NCIMB 8711 / NCTC 7292 / S-41).